Consider the following 241-residue polypeptide: C-8 sterol isomerase (241 aa).

A helical transmembrane segment spans residues 23–43 (WIIVSAALVGFCALIAALDSI).

Belongs to the ERG2 family.

It localises to the endoplasmic reticulum membrane. It participates in steroid metabolism; ergosterol biosynthesis; ergosterol from zymosterol: step 2/5. Catalyzes the reaction which results in unsaturation at C-7 in the B ring of sterols. The chain is C-8 sterol isomerase (ERG2) from Mycosarcoma maydis (Corn smut fungus).